The sequence spans 254 residues: Leucyl/phenylalanyl-tRNA--protein transferase (254 aa).

This sequence belongs to the L/F-transferase family.

Its subcellular location is the cytoplasm. It catalyses the reaction N-terminal L-lysyl-[protein] + L-leucyl-tRNA(Leu) = N-terminal L-leucyl-L-lysyl-[protein] + tRNA(Leu) + H(+). The catalysed reaction is N-terminal L-arginyl-[protein] + L-leucyl-tRNA(Leu) = N-terminal L-leucyl-L-arginyl-[protein] + tRNA(Leu) + H(+). It carries out the reaction L-phenylalanyl-tRNA(Phe) + an N-terminal L-alpha-aminoacyl-[protein] = an N-terminal L-phenylalanyl-L-alpha-aminoacyl-[protein] + tRNA(Phe). Functionally, functions in the N-end rule pathway of protein degradation where it conjugates Leu, Phe and, less efficiently, Met from aminoacyl-tRNAs to the N-termini of proteins containing an N-terminal arginine or lysine. This is Leucyl/phenylalanyl-tRNA--protein transferase from Burkholderia cenocepacia (strain HI2424).